A 202-amino-acid chain; its full sequence is Translation initiation factor IF-3 (202 aa).

Residues 172-202 (KTRASARHPEVPGAGSVQDIDATGDTDGSPH) are disordered.

Belongs to the IF-3 family. In terms of assembly, monomer.

The protein resides in the cytoplasm. In terms of biological role, IF-3 binds to the 30S ribosomal subunit and shifts the equilibrium between 70S ribosomes and their 50S and 30S subunits in favor of the free subunits, thus enhancing the availability of 30S subunits on which protein synthesis initiation begins. This chain is Translation initiation factor IF-3, found in Mycobacterium leprae (strain TN).